The sequence spans 250 residues: Flavin-dependent thymidylate synthase (250 aa).

The ThyX domain occupies 7-233 (LRVQLIAKTE…PQVFSDFEIV (227 aa)). FAD contacts are provided by residues Ser-71, 95–97 (RHR), and Gln-103. DUMP contacts are provided by residues 92-95 (ELIR), 103-107 (QLSQR), and Arg-172. The short motif at 95 to 105 (RHRHFSYSQLS) is the ThyX motif element. FAD is bound by residues 188-190 (NYR) and His-194. Arg-199 contributes to the dUMP binding site. Arg-199 (involved in ionization of N3 of dUMP, leading to its activation) is an active-site residue.

It belongs to the thymidylate synthase ThyX family. As to quaternary structure, homotetramer. FAD serves as cofactor.

The enzyme catalyses dUMP + (6R)-5,10-methylene-5,6,7,8-tetrahydrofolate + NADPH + H(+) = dTMP + (6S)-5,6,7,8-tetrahydrofolate + NADP(+). It functions in the pathway pyrimidine metabolism; dTTP biosynthesis. In terms of biological role, catalyzes the reductive methylation of 2'-deoxyuridine-5'-monophosphate (dUMP) to 2'-deoxythymidine-5'-monophosphate (dTMP) while utilizing 5,10-methylenetetrahydrofolate (mTHF) as the methyl donor, and NADPH and FADH(2) as the reductant. This is Flavin-dependent thymidylate synthase from Mycolicibacterium vanbaalenii (strain DSM 7251 / JCM 13017 / BCRC 16820 / KCTC 9966 / NRRL B-24157 / PYR-1) (Mycobacterium vanbaalenii).